The following is a 290-amino-acid chain: Glycine--tRNA ligase alpha subunit (290 aa).

The protein belongs to the class-II aminoacyl-tRNA synthetase family. Tetramer of two alpha and two beta subunits.

It localises to the cytoplasm. It carries out the reaction tRNA(Gly) + glycine + ATP = glycyl-tRNA(Gly) + AMP + diphosphate. The protein is Glycine--tRNA ligase alpha subunit of Prochlorococcus marinus (strain NATL1A).